The following is an 884-amino-acid chain: MALSPAAAGRTGRNNNNDAGLADPLLPAGGGGGGGKDKYWVPADEEEEICRGEDGGRPPAPPLLYRTFKVSGVLLHPYRLLTLVRLIAVVLFLAWRLKHRDSDAMWLWWISIAGDFWFGVTWLLNQASKLNPVKRVPDLSLLRRRFDDGGLPGIDVFINTVDPVDEPMLYTMNSILSILATDYPADRHAAYLSDDGASLAHYEGLIETARFAALWVPFCRKHRVEPRAPESYFAAKAAPYAGPALPEEFFGDRRLVRREYEEFKARLDALFTDIPQRSEASVGNANTKGAKATLMADGTPWPGTWTEPAENHKKGQHAGIVKVMLSHPGEEPQLGMPASSGHPLDFSAVDVRLPILVYIAREKRPGYDHQKKAGAMNAQLRVSALLSNAPFIFNFDGDHYINNSQAFRAALCFMLDCRHGDDTAFVQFPQRFDDVDPTDRYCNHNRVFFDATLLGLNGVQGPSYVGTGCMFRRVALYGADPPRWRPEDDDAKALGCPGRYGNSMPFINTIPAAASQERSIASPAAASLDETAAMAEVEEVMTCAYEDGTEWGDGVGWVYDIATEDVVTGFRLHRKGWRSMYCAMEPDAFRGTAPINLTERLYQILRWSGGSLEMFFSRNCPLLAGCRLRPMQRVAYANMTAYPVSALFMVVYDLLPVIWLSHHGEFHIQKPFSTYVAYLVAVIAMIEVIGLVEIKWAGLTLLDWWRNEQFYMIGATGVYLAAVLHIVLKRLLGLKGVRFKLTAKQLAGGARERFAELYDVHWSPLLAPTVVVMAVNVTAIGAAAGKAVVGGWTPAQVAGASAGLVFNVWVLVLLYPFALGIMGRWSKRPCALFALLVAACAAVAAGFVAVHAVLAAGSAAPSWLGWSRGATAILPSSWRLKRGF.

Over residues 1–27 the composition is skewed to low complexity; that stretch reads MALSPAAAGRTGRNNNNDAGLADPLLP. A disordered region spans residues 1-34; sequence MALSPAAAGRTGRNNNNDAGLADPLLPAGGGGGG. A run of 2 helical transmembrane segments spans residues 73–93 and 104–124; these read VLLHPYRLLTLVRLIAVVLFL and AMWLWWISIAGDFWFGVTWLL. The active site involves D195. Substrate-binding residues include D396 and D398. D565 is a catalytic residue. Helical transmembrane passes span 640–660, 672–692, 708–728, 765–785, 802–822, and 830–850; these read TAYPVSALFMVVYDLLPVIWL, FSTYVAYLVAVIAMIEVIGLV, EQFYMIGATGVYLAAVLHIVL, LLAPTVVVMAVNVTAIGAAAG, AGLVFNVWVLVLLYPFALGIM, and CALFALLVAACAAVAAGFVAV.

This sequence belongs to the glycosyltransferase 2 family. Plant cellulose synthase-like F subfamily.

Its subcellular location is the golgi apparatus membrane. Its function is as follows. May catalyze both beta-1,3 and beta-1,4 glycosidic linkage on beta-D-glucan. Essential for (1,3;1,4)-beta-D-glucans synthesis in grasses and cereals (Poaceae). The mixed-linked glucans (which are not present in walls of dicotyledons or most other monocotyledonous plants) are particularly important constituents of the walls of the starchy endosperm and aleurone cells of cereal grains such as oats, wheat, rice and barley. They can account for up to 70% by weight of the wall. The polypeptide is Probable mixed-linked glucan synthase 9 (CSLF9) (Oryza sativa subsp. japonica (Rice)).